The primary structure comprises 195 residues: CD70 antigen (195 aa).

The Cytoplasmic portion of the chain corresponds to 1–23 (MPEEGRPCPWVRWSGTAFQRQWP). The helical; Signal-anchor for type II membrane protein transmembrane segment at 24 to 44 (WLLLVVFITVFCCWFHCSGLL) threads the bilayer. Residues 45–195 (SKQQQRLLEH…TFFGVQWICP (151 aa)) are Extracellular-facing. A THD domain is found at 58–193 (HTAELQLNLT…DETFFGVQWI (136 aa)). Asn65 and Asn116 each carry an N-linked (GlcNAc...) asparagine glycan. Cystine bridges form between Cys117-Cys153 and Cys135-Cys170. Asn172 carries an N-linked (GlcNAc...) asparagine glycan.

It belongs to the tumor necrosis factor family. As to quaternary structure, homotrimer. N-glycosylated. As to expression, very low level of expression. Detected in splenocytes and thymocytes.

Its subcellular location is the cell membrane. Expressed at the plasma membrane of B cells, it is the ligand of the CD27 receptor which is specifically expressed at the surface of T cells. The CD70-CD27 signaling pathway mediates antigen-specific T cell activation and expansion which in turn provides immune surveillance of B cells. The chain is CD70 antigen from Mus musculus (Mouse).